The chain runs to 634 residues: 1,4-alpha-glucan branching enzyme GlgB (634 aa).

D305 (nucleophile) is an active-site residue. Residue E357 is the Proton donor of the active site.

Belongs to the glycosyl hydrolase 13 family. GlgB subfamily. In terms of assembly, monomer.

It carries out the reaction Transfers a segment of a (1-&gt;4)-alpha-D-glucan chain to a primary hydroxy group in a similar glucan chain.. It functions in the pathway glycan biosynthesis; glycogen biosynthesis. Catalyzes the formation of the alpha-1,6-glucosidic linkages in glycogen by scission of a 1,4-alpha-linked oligosaccharide from growing alpha-1,4-glucan chains and the subsequent attachment of the oligosaccharide to the alpha-1,6 position. In Lactiplantibacillus plantarum (strain ATCC BAA-793 / NCIMB 8826 / WCFS1) (Lactobacillus plantarum), this protein is 1,4-alpha-glucan branching enzyme GlgB.